The following is a 703-amino-acid chain: Polyribonucleotide nucleotidyltransferase (703 aa).

2 residues coordinate Mg(2+): Asp486 and Asp492. The KH domain maps to 553–612 (PKIEIIHINPDKIRDVIGPGGKKINEIIDATGVKLDIEQDGTVFIGSSDASMIEAAKKLI). The S1 motif domain occupies 622 to 690 (GQIYMATVKR…KQGRVNASRK (69 aa)).

Belongs to the polyribonucleotide nucleotidyltransferase family. The cofactor is Mg(2+).

Its subcellular location is the cytoplasm. It catalyses the reaction RNA(n+1) + phosphate = RNA(n) + a ribonucleoside 5'-diphosphate. Functionally, involved in mRNA degradation. Catalyzes the phosphorolysis of single-stranded polyribonucleotides processively in the 3'- to 5'-direction. The protein is Polyribonucleotide nucleotidyltransferase of Macrococcus caseolyticus (strain JCSC5402) (Macrococcoides caseolyticum).